Here is a 137-residue protein sequence, read N- to C-terminus: Large ribosomal subunit protein uL16 (137 aa).

It belongs to the universal ribosomal protein uL16 family. As to quaternary structure, part of the 50S ribosomal subunit.

In terms of biological role, binds 23S rRNA and is also seen to make contacts with the A and possibly P site tRNAs. This chain is Large ribosomal subunit protein uL16, found in Stutzerimonas stutzeri (strain A1501) (Pseudomonas stutzeri).